The chain runs to 468 residues: Keratin, type I cytoskeletal 26 (468 aa).

Residues 1 to 82 (MSFRLSGGSR…GNEHSLLSGN (82 aa)) are head. The segment at 83-118 (EKVTMQNLNDRLASYLDHVHALEEANADLEQKIKGW) is coil 1A. The IF rod domain occupies 83 to 398 (EKVTMQNLND…NLLDGEERKS (316 aa)). The linker 1 stretch occupies residues 119 to 140 (YEKCEPGSSREHDHDYSRYFSV). Residues 141-232 (IEDLKRQIIS…KSHEEEMEVL (92 aa)) are coil 1B. Residues 233-255 (QYTAGGNVNVEMNATPGVDLTVL) are linker 12. A coil 2 region spans residues 256–394 (LNNMRAEYED…DIYCNLLDGE (139 aa)). The segment at 395 to 465 (ERKSKSTCYK…NITVEQRVPS (71 aa)) is tail.

This sequence belongs to the intermediate filament family. In terms of assembly, heterotetramer of two type I and two type II keratins. Strongly expressed in skin and scalp, and weak expression observed in thymus and tongue. In the hair follicle, expression is restricted to the mid- to upper inner root sheath cuticle, being present slightly above the apex of the dermal papilla (at protein level).

The protein is Keratin, type I cytoskeletal 26 of Homo sapiens (Human).